The primary structure comprises 215 residues: Imidazole glycerol phosphate synthase subunit HisH (215 aa).

Residues 7-215 (TIAVIDYGMG…LLKNFVEWQP (209 aa)) form the Glutamine amidotransferase type-1 domain. Cys86 serves as the catalytic Nucleophile. Active-site residues include His195 and Glu197.

In terms of assembly, heterodimer of HisH and HisF.

The protein localises to the cytoplasm. The catalysed reaction is 5-[(5-phospho-1-deoxy-D-ribulos-1-ylimino)methylamino]-1-(5-phospho-beta-D-ribosyl)imidazole-4-carboxamide + L-glutamine = D-erythro-1-(imidazol-4-yl)glycerol 3-phosphate + 5-amino-1-(5-phospho-beta-D-ribosyl)imidazole-4-carboxamide + L-glutamate + H(+). It catalyses the reaction L-glutamine + H2O = L-glutamate + NH4(+). It functions in the pathway amino-acid biosynthesis; L-histidine biosynthesis; L-histidine from 5-phospho-alpha-D-ribose 1-diphosphate: step 5/9. In terms of biological role, IGPS catalyzes the conversion of PRFAR and glutamine to IGP, AICAR and glutamate. The HisH subunit catalyzes the hydrolysis of glutamine to glutamate and ammonia as part of the synthesis of IGP and AICAR. The resulting ammonia molecule is channeled to the active site of HisF. This is Imidazole glycerol phosphate synthase subunit HisH from Dechloromonas aromatica (strain RCB).